A 130-amino-acid chain; its full sequence is Histone H2A type 1 (130 aa).

Positions 1–22 (MSGRGKQGGKTRAKAKTRSSRA) are disordered. At Ser-2 the chain carries N-acetylserine. Ser-2 carries the phosphoserine modification. The residue at position 6 (Lys-6) is an N6-(2-hydroxyisobutyryl)lysine. Lys-6 carries the N6-acetyllysine modification. The span at 7-19 (QGGKTRAKAKTRS) shows a compositional bias: basic residues. The residue at position 10 (Lys-10) is an N6-(2-hydroxyisobutyryl)lysine; alternate. Lys-10 carries the post-translational modification N6-lactoyllysine; alternate. Lys-10 carries the post-translational modification N6-succinyllysine. Residues Lys-14 and Lys-16 each participate in a glycyl lysine isopeptide (Lys-Gly) (interchain with G-Cter in ubiquitin) cross-link. Residue Lys-37 is modified to N6-(2-hydroxyisobutyryl)lysine; alternate. An N6-(2-hydroxyisobutyryl)lysine mark is found at Lys-75 and Lys-76. N6-(2-hydroxyisobutyryl)lysine; alternate is present on Lys-96. The residue at position 96 (Lys-96) is an N6-succinyllysine. The residue at position 96 (Lys-96) is an N6-glutaryllysine; alternate. Gln-105 carries the post-translational modification N5-methylglutamine. Lys-119 carries the post-translational modification N6-(2-hydroxyisobutyryl)lysine; alternate. Residue Lys-119 is modified to N6-glutaryllysine; alternate. Lys-120 is covalently cross-linked (Glycyl lysine isopeptide (Lys-Gly) (interchain with G-Cter in ubiquitin)).

This sequence belongs to the histone H2A family. The nucleosome is a histone octamer containing two molecules each of H2A, H2B, H3 and H4 assembled in one H3-H4 heterotetramer and two H2A-H2B heterodimers. The octamer wraps approximately 147 bp of DNA. Post-translationally, monoubiquitination of Lys-120 (H2AK119Ub) gives a specific tag for epigenetic transcriptional repression. Following DNA double-strand breaks (DSBs), it is ubiquitinated through 'Lys-63' linkage of ubiquitin moieties, leading to the recruitment of repair proteins to sites of DNA damage. H2AK119Ub and ionizing radiation-induced 'Lys-63'-linked ubiquitination are distinct events. In terms of processing, phosphorylation on Ser-2 is enhanced during mitosis. Phosphorylation on Ser-2 directly represses transcription. Glutamine methylation at Gln-105 (H2AQ104me) by FBL is specifically dedicated to polymerase I. It is present at 35S ribosomal DNA locus and impairs binding of the FACT complex.

It localises to the nucleus. It is found in the chromosome. Core component of nucleosome. Nucleosomes wrap and compact DNA into chromatin, limiting DNA accessibility to the cellular machineries which require DNA as a template. Histones thereby play a central role in transcription regulation, DNA repair, DNA replication and chromosomal stability. DNA accessibility is regulated via a complex set of post-translational modifications of histones, also called histone code, and nucleosome remodeling. In Xenopus laevis (African clawed frog), this protein is Histone H2A type 1.